The sequence spans 365 residues: Centrosomal protein of 41 kDa B (365 aa).

Residues 1–14 (MSAKRSIGDPEILK) are compositionally biased toward basic and acidic residues. Disordered stretches follow at residues 1–23 (MSAK…NQKY) and 104–123 (EFLT…SKSP). A Rhodanese domain is found at 177–274 (EDCPFLLLDV…ISQKFPQGLT (98 aa)). Residues 329-365 (TSTPSRLRLDSRNSKVPSSASSARSLSSTSSHSKPWK) are disordered. Residues 342-365 (SKVPSSASSARSLSSTSSHSKPWK) are compositionally biased toward low complexity.

Belongs to the CEP41 family.

The protein resides in the cytoplasm. Its subcellular location is the cytoskeleton. It is found in the microtubule organizing center. The protein localises to the centrosome. It localises to the cell projection. The protein resides in the cilium. Its subcellular location is the cilium basal body. In terms of biological role, required during ciliogenesis for tubulin glutamylation in cilium. Probably acts by participating in the transport of tubulin polyglutamylases between the basal body and the cilium. This Xenopus laevis (African clawed frog) protein is Centrosomal protein of 41 kDa B (cep41-b).